The chain runs to 130 residues: Astrocytic phosphoprotein PEA-15 (130 aa).

The 79-residue stretch at 3-81 folds into the DED domain; that stretch reads EYGTLLQDLT…RPDLLTMVVD (79 aa). Phosphoserine occurs at positions 61 and 90. The segment at 98–107 is microtubule-binding; it reads KLTRIPSAKK. Ser104 is subject to Phosphoserine; by PKC. Phosphoserine; by CaMK2 is present on Ser116. The segment at 122–129 is microtubule-binding; that stretch reads KLAPPPKK.

As to quaternary structure, binds RPS6KA3, MAPK3 and MAPK1. Interacts with CASP8 and FADD. Transient interaction with PLD1 and PLD2. In terms of processing, phosphorylated by protein kinase C and calcium-calmodulin-dependent protein kinase. These phosphorylation events are modulated by neurotransmitters or hormones. Predominantly expressed in the brain. Low levels in some peripheral organs.

The protein localises to the cytoplasm. Functionally, blocks Ras-mediated inhibition of integrin activation and modulates the ERK MAP kinase cascade. Inhibits RPS6KA3 activities by retaining it in the cytoplasm. Inhibits both TNFRSF6- and TNFRSF1A-mediated CASP8 activity and apoptosis. Regulates glucose transport by controlling both the content of SLC2A1 glucose transporters on the plasma membrane and the insulin-dependent trafficking of SLC2A4 from the cell interior to the surface. The polypeptide is Astrocytic phosphoprotein PEA-15 (Pea15) (Mus musculus (Mouse)).